The primary structure comprises 435 residues: MWRIWRCRLSFLFATGCLLGALTAGLGSQMSDSVGRNVQAPAGVADASQEAGDVVEERTERTEEQVFAPGPPRRHSSESLFPRNASVTARRRRNRRIAPIATAVGVAVILAALYVLRRRRAQPPQEPEPPTRLRTPRPRAPSEQQQPSESEPPAEVPMTPDPLTLRFTCLGDRNVIFFGPSGRQDGFTPLYDPSPSKRVATVDAGTYGLFIGGVGMNGEFADTIIEEARRNRIPLTATELSAESQEIQERLLHDAERQPGTLVEIDSGRFSRVFARSFAYVAIVPNTVWDESETGKNVGATFLHILKPEVTPHGNEMNDVMLYTVAPFGNASDSAYNMAYKATMLGIVGAVSEYNKTPWGEVKPVEAIRLPLLGAGHFRGRRGLHSIGRANAVAVEAAITRFDPRVELQFMYEPSDTALRGLMESERKYKFPQGD.

A signal peptide spans 1-20; that stretch reads MWRIWRCRLSFLFATGCLLG. Topologically, residues 21-95 are vacuolar; it reads ALTAGLGSQM…SVTARRRRNR (75 aa). Residues 43–88 form a disordered region; it reads GVADASQEAGDVVEERTERTEEQVFAPGPPRRHSSESLFPRNASVT. Basic and acidic residues predominate over residues 55 to 64; the sequence is VEERTERTEE. Residues 96-116 form a helical membrane-spanning segment; that stretch reads RIAPIATAVGVAVILAALYVL. Topologically, residues 117–435 are cytoplasmic; the sequence is RRRRAQPPQE…ERKYKFPQGD (319 aa). The segment at 120-162 is disordered; the sequence is RAQPPQEPEPPTRLRTPRPRAPSEQQQPSESEPPAEVPMTPDP. The segment covering 141 to 153 has biased composition (low complexity); the sequence is PSEQQQPSESEPP.

Interacts with host SAMM50.

Its subcellular location is the parasitophorous vacuole membrane. Its function is as follows. During host cell infection by tachyzoites, does not play a role in tethering the parasitophorous vacuole to the host mitochondria, probably because it does not bind host mitochondrial import protein TOMM70. The sequence is that of Mitochondrial association factor 1 form a1 from Toxoplasma gondii.